A 421-amino-acid chain; its full sequence is Eukaryotic translation initiation factor 3 subunit E (421 aa).

The 180-residue stretch at 215-394 (FFQNDTKGKD…STVILNHPSV (180 aa)) folds into the PCI domain.

It belongs to the eIF-3 subunit E family. Component of the eukaryotic translation initiation factor 3 (eIF-3) complex.

It localises to the cytoplasm. Component of the eukaryotic translation initiation factor 3 (eIF-3) complex, which is involved in protein synthesis of a specialized repertoire of mRNAs and, together with other initiation factors, stimulates binding of mRNA and methionyl-tRNAi to the 40S ribosome. The eIF-3 complex specifically targets and initiates translation of a subset of mRNAs involved in cell proliferation. The polypeptide is Eukaryotic translation initiation factor 3 subunit E (Yarrowia lipolytica (strain CLIB 122 / E 150) (Yeast)).